Reading from the N-terminus, the 326-residue chain is Pancreas transcription factor 1 subunit alpha (326 aa).

The bHLH domain occupies 162-214 (QLRQAANVRERRRMQSINDAFEGLRSHIPTLPYEKRLSKVDTLRLAIGYINFL). A compositionally biased stretch (gly residues) spans 229 to 240 (TGGCGGPGGSRH). 2 disordered regions span residues 229 to 249 (TGGCGGPGGSRHLGGDSPGNQ) and 304 to 326 (DPRKLNSKSFDNIENEPPFEFVS).

Component of the pancreas transcription factor 1 complex (PTF1) which is composed of TCF3/p75, TCF12/p64 and PTF1A/p48. TCF3 is responsible for the nuclear import of the p48/p64 complex. Interacts with TCF3 and RBPSUH/RBP-Jkappa. Exocrine pancreas-specific. Expressed in azaserine-induced pancreatic tumors (at protein level). Expressed in AR42J cells but not in ARIP, DSL6A, or DSL6B cells. Down-regulation is associated with the change of an azaserine-induced acinar cell carcinoma to a ductal phenotype.

The protein resides in the nucleus. Its subcellular location is the cytoplasm. Its function is as follows. Transcription factor implicated in the cell fate determination in various organs. Binds to the E-box consensus sequence 5'-CANNTG-3'. Plays a role in early and late pancreas development and differentiation. Important for determining whether cells allocated to the pancreatic buds continue towards pancreatic organogenesis or revert back to duodenal fates. May be involved in the maintenance of exocrine pancreas-specific gene expression including ELA1 and amylase. Required for the formation of pancreatic acinar and ductal cells. Plays an important role in cerebellar development. Directly regulated by FOXN4 and RORC during retinal development, FOXN4-PTF1A pathway plays a central role in directing the differentiation of retinal progenitors towards horizontal and amacrine fates. The sequence is that of Pancreas transcription factor 1 subunit alpha (Ptf1a) from Rattus norvegicus (Rat).